We begin with the raw amino-acid sequence, 262 residues long: Type III pantothenate kinase (262 aa).

9 to 16 (DAGNSRIK) is an ATP binding site. Substrate-binding positions include Y96 and 103–106 (GSDR). D105 serves as the catalytic Proton acceptor. T129 provides a ligand contact to ATP. Position 189 (T189) interacts with substrate.

This sequence belongs to the type III pantothenate kinase family. As to quaternary structure, homodimer. NH4(+) is required as a cofactor. The cofactor is K(+).

It localises to the cytoplasm. It catalyses the reaction (R)-pantothenate + ATP = (R)-4'-phosphopantothenate + ADP + H(+). It participates in cofactor biosynthesis; coenzyme A biosynthesis; CoA from (R)-pantothenate: step 1/5. Its function is as follows. Catalyzes the phosphorylation of pantothenate (Pan), the first step in CoA biosynthesis. This chain is Type III pantothenate kinase, found in Burkholderia multivorans (strain ATCC 17616 / 249).